The sequence spans 75 residues: DNA-directed RNA polymerase subunit omega (75 aa).

Belongs to the RNA polymerase subunit omega family. As to quaternary structure, in cyanobacteria the RNAP catalytic core is composed of 2 alpha, 1 beta, 1 beta', 1 gamma and 1 omega subunit. When a sigma factor is associated with the core the holoenzyme is formed, which can initiate transcription.

It carries out the reaction RNA(n) + a ribonucleoside 5'-triphosphate = RNA(n+1) + diphosphate. Its function is as follows. Promotes RNA polymerase assembly. Latches the N- and C-terminal regions of the beta' subunit thereby facilitating its interaction with the beta and alpha subunits. In Gloeothece citriformis (strain PCC 7424) (Cyanothece sp. (strain PCC 7424)), this protein is DNA-directed RNA polymerase subunit omega.